A 506-amino-acid chain; its full sequence is Maturase K (506 aa).

It belongs to the intron maturase 2 family. MatK subfamily.

It localises to the plastid. Its subcellular location is the chloroplast. In terms of biological role, usually encoded in the trnK tRNA gene intron. Probably assists in splicing its own and other chloroplast group II introns. The chain is Maturase K from Lathyrus tingitanus (Tangier pea).